The following is a 62-amino-acid chain: Sperm protamine P1 (62 aa).

The interval 1 to 62 (MARYRHSRSR…RYSRRRRRRY (62 aa)) is disordered.

The protein belongs to the protamine P1 family. Testis.

The protein localises to the nucleus. The protein resides in the chromosome. Functionally, protamines substitute for histones in the chromatin of sperm during the haploid phase of spermatogenesis. They compact sperm DNA into a highly condensed, stable and inactive complex. The protein is Sperm protamine P1 (PRM1) of Wallabia bicolor (Swamp wallaby).